A 31-amino-acid chain; its full sequence is Cytochrome b6-f complex subunit 8 (31 aa).

Residues 5–25 form a helical membrane-spanning segment; the sequence is IVSLAWAALMVVFTFSLSLVV.

The protein belongs to the PetN family. The 4 large subunits of the cytochrome b6-f complex are cytochrome b6, subunit IV (17 kDa polypeptide, PetD), cytochrome f and the Rieske protein, while the 4 small subunits are PetG, PetL, PetM and PetN. The complex functions as a dimer.

Its subcellular location is the plastid. It localises to the chloroplast thylakoid membrane. Functionally, component of the cytochrome b6-f complex, which mediates electron transfer between photosystem II (PSII) and photosystem I (PSI), cyclic electron flow around PSI, and state transitions. The protein is Cytochrome b6-f complex subunit 8 of Cicer arietinum (Chickpea).